We begin with the raw amino-acid sequence, 503 residues long: Cytochrome P450 71B6 (503 aa).

The chain crosses the membrane as a helical span at residues 10 to 30 (TELLPWLLLLLIPPLLIFFLL). Cys-446 is a binding site for heme.

This sequence belongs to the cytochrome P450 family. The cofactor is heme.

The protein localises to the membrane. This is Cytochrome P450 71B6 (CYP71B6) from Arabidopsis thaliana (Mouse-ear cress).